A 283-amino-acid polypeptide reads, in one-letter code: Methyltransferase cpsF (283 aa).

The protein belongs to the methyltransferase superfamily. LaeA methyltransferase family.

The enzyme catalyses campesine A + S-adenosyl-L-methionine = campesine B + S-adenosyl-L-homocysteine + H(+). It participates in alkaloid biosynthesis. Functionally, methyltransferase; part of the gene cluster that mediates the biosynthesis of campesine G, a dimeric indole piperazine alkaloid that shows good insecticidal activity Galleria mellonella. Within the pathway, cpsF methylates campesine A at N13 of piperazine ring to produce campesine B. The non-canonical non-ribosomal peptide synthetase cpsA catalyzes the first steps of the pathway by producing L-tryptophanal and L-valinal from their respective amino-acids. These products condensate spontaneously to form trypyl-valyl pyrazine also known as didehydrocampesine A. The NmrA-like family domain-containing oxidoreductase cpsB is the next enzyme in cps pathway and reduces the unstable didehydrocampesine A to campesine A. The methyltransferase cpsF and the acetyltransferase cpsE both recognize N13 of piperazine ring to carry out methylation and acetylation of campesine A to produce campesine C and B, respectively. The cytochrome P450 monooxygenase cpsD then acts as a dimerase that catalyzes oxidative heterocoupling between campesine B and C to produce heterodimers with unexpected 6/5/6/6/6/6/5/6 eight-ring scaffold called campesine D. Finally,the cytochrome P450 monooxygenase cpsC is a regioselective dehydrogenase that catalyzes dehydrogenation reaction towards C2-N1 to produce campesine G. The sequence is that of Methyltransferase cpsF from Aspergillus campestris (strain IBT 28561).